Here is an 83-residue protein sequence, read N- to C-terminus: Small proline-rich protein 2A3 (83 aa).

Repeat copies occupy residues 21 to 29 (PKCPEPCPP), 30 to 38 (QVWPGPCRP), 39 to 47 (VMCFEPCLP), 48 to 56 (SVWPGPCRP), and 57 to 65 (VVCYEQCPP). The interval 21–65 (PKCPEPCPPQVWPGPCRPVMCFEPCLPSVWPGPCRPVVCYEQCPP) is 5 X 9 AA approximate tandem repeats.

This sequence belongs to the cornifin (SPRR) family. In terms of processing, forms five pairs of intrachain disulfide bonds.

The protein localises to the secreted. The protein resides in the extracellular space. It localises to the cytoplasmic vesicle. Its subcellular location is the secretory vesicle. In terms of biological role, gut bactericidal protein that selectively kills Gram-positive bacteria by binding to negatively charged lipids on bacterial membranes, leading to bacterial membrane permeabilization and disruption. Specifically binds lipids bearing negatively charged headgroups, such as phosphatidic acid, phosphatidylserine (PS), cardiolipin (CL), and phosphatidylinositol phosphates, but not to zwitterionic or neutral lipids. Induced by type-2 cytokines in response to helminth infection and is required to protect against helminth-induced bacterial invasion of intestinal tissue. May also be involved in the development of the cornified envelope of squamous epithelia; however, additional evidences are required to confirm this result in vivo. This Mus musculus (Mouse) protein is Small proline-rich protein 2A3.